The primary structure comprises 286 residues: Protein N-terminal amidase (286 aa).

The region spanning 1-286 is the CN hydrolase domain; the sequence is MKFGCVQFFP…NGIVVGELEK (286 aa). Catalysis depends on E43, which acts as the Proton acceptor. The Proton donor role is filled by K121. The active-site Nucleophile is C155.

The protein belongs to the carbon-nitrogen hydrolase superfamily.

The protein localises to the cytoplasm. It is found in the nucleus. Functionally, deamidates N-terminal Asn and Gln. Component of a targeting complex in the N-end rule pathway. The protein is Protein N-terminal amidase (nta1) of Schizosaccharomyces pombe (strain 972 / ATCC 24843) (Fission yeast).